The sequence spans 1161 residues: Nardilysin (1161 aa).

Positions 1 to 18 are cleaved as a signal peptide; the sequence is MLRRVAVAAVCVTGRKLR. Disordered stretches follow at residues 49–103 and 130–218; these read MPGR…IIKS and VEGK…KKTT. Serine 85, serine 91, and serine 93 each carry phosphoserine. A compositionally biased stretch (acidic residues) spans 138–209; sequence TDEEEEEEEE…EENELEELEE (72 aa). Histidine 244 is a Zn(2+) binding site. Glutamate 247 (proton acceptor) is an active-site residue. Zn(2+)-binding residues include histidine 248 and glutamate 325.

The protein belongs to the peptidase M16 family. As to quaternary structure, interacts with BACE1 and NRG1. Zn(2+) is required as a cofactor. Highly expressed in brain of early postnatal mice but expressed at a lower level in the brains of adult mice. Expression is high in cortical neurons, and lower in neurons in the striatum. Very low expression detected in the corpus callosum. Also expressed in the gray matter in spinal cord and dorsal root ganglia.

It is found in the mitochondrion. The protein localises to the cell projection. It localises to the dendrite. It carries out the reaction Hydrolysis of polypeptides, preferably at -Xaa-|-Arg-Lys-, and less commonly at -Arg-|-Arg-Xaa-, in which Xaa is not Arg or Lys.. Its function is as follows. Cleaves peptide substrates on the N-terminus of arginine residues in dibasic pairs. Is a critical activator of BACE1- and ADAM17-mediated pro-neuregulin ectodomain shedding, involved in the positive regulation of axonal maturation and myelination. Required for proper functioning of 2-oxoglutarate dehydrogenase (OGDH). This Mus musculus (Mouse) protein is Nardilysin.